The following is a 430-amino-acid chain: tRNA(Ile)-lysidine synthase (430 aa).

21 to 26 (SGGLDS) serves as a coordination point for ATP.

It belongs to the tRNA(Ile)-lysidine synthase family.

It is found in the cytoplasm. It carries out the reaction cytidine(34) in tRNA(Ile2) + L-lysine + ATP = lysidine(34) in tRNA(Ile2) + AMP + diphosphate + H(+). In terms of biological role, ligates lysine onto the cytidine present at position 34 of the AUA codon-specific tRNA(Ile) that contains the anticodon CAU, in an ATP-dependent manner. Cytidine is converted to lysidine, thus changing the amino acid specificity of the tRNA from methionine to isoleucine. This chain is tRNA(Ile)-lysidine synthase, found in Salmonella newport (strain SL254).